We begin with the raw amino-acid sequence, 556 residues long: Formate--tetrahydrofolate ligase (556 aa).

Residue 65-72 (TPAGEGKS) participates in ATP binding.

Belongs to the formate--tetrahydrofolate ligase family.

It catalyses the reaction (6S)-5,6,7,8-tetrahydrofolate + formate + ATP = (6R)-10-formyltetrahydrofolate + ADP + phosphate. The protein operates within one-carbon metabolism; tetrahydrofolate interconversion. In Streptococcus agalactiae serotype Ia (strain ATCC 27591 / A909 / CDC SS700), this protein is Formate--tetrahydrofolate ligase.